The primary structure comprises 861 residues: DNA mismatch repair protein MutS (861 aa).

Residue 617–624 (GPNMGGKS) participates in ATP binding. The interval 799-822 (ETTSLPHEQPPAAKAKDAPQVPHQ) is disordered. Over residues 808–820 (PPAAKAKDAPQVP) the composition is skewed to low complexity.

Belongs to the DNA mismatch repair MutS family.

Its function is as follows. This protein is involved in the repair of mismatches in DNA. It is possible that it carries out the mismatch recognition step. This protein has a weak ATPase activity. The chain is DNA mismatch repair protein MutS from Pseudomonas putida (strain GB-1).